Consider the following 373-residue polypeptide: 3-dehydroquinate synthase (373 aa).

Residues 107 to 111 (GVIGD), 131 to 132 (TS), Lys-144, and Lys-153 contribute to the NAD(+) site. Glu-186, His-249, and His-267 together coordinate Zn(2+).

It belongs to the sugar phosphate cyclases superfamily. Dehydroquinate synthase family. The cofactor is Co(2+). Zn(2+) is required as a cofactor. It depends on NAD(+) as a cofactor.

It localises to the cytoplasm. It catalyses the reaction 7-phospho-2-dehydro-3-deoxy-D-arabino-heptonate = 3-dehydroquinate + phosphate. It functions in the pathway metabolic intermediate biosynthesis; chorismate biosynthesis; chorismate from D-erythrose 4-phosphate and phosphoenolpyruvate: step 2/7. Catalyzes the conversion of 3-deoxy-D-arabino-heptulosonate 7-phosphate (DAHP) to dehydroquinate (DHQ). This chain is 3-dehydroquinate synthase, found in Ruegeria sp. (strain TM1040) (Silicibacter sp.).